The sequence spans 261 residues: Ribosomal RNA small subunit methyltransferase A (261 aa).

Asparagine 20, leucine 22, glycine 47, glutamate 68, aspartate 90, and asparagine 110 together coordinate S-adenosyl-L-methionine.

This sequence belongs to the class I-like SAM-binding methyltransferase superfamily. rRNA adenine N(6)-methyltransferase family. RsmA subfamily.

It is found in the cytoplasm. It catalyses the reaction adenosine(1518)/adenosine(1519) in 16S rRNA + 4 S-adenosyl-L-methionine = N(6)-dimethyladenosine(1518)/N(6)-dimethyladenosine(1519) in 16S rRNA + 4 S-adenosyl-L-homocysteine + 4 H(+). In terms of biological role, specifically dimethylates two adjacent adenosines (A1518 and A1519) in the loop of a conserved hairpin near the 3'-end of 16S rRNA in the 30S particle. May play a critical role in biogenesis of 30S subunits. This Prosthecochloris aestuarii (strain DSM 271 / SK 413) protein is Ribosomal RNA small subunit methyltransferase A.